The following is a 254-amino-acid chain: Homeobox protein Nkx-6.3 (254 aa).

2 disordered regions span residues 112–140 (QDWR…RPTF) and 191–228 (KSAV…DPDS). Positions 120 to 129 (ALSSASNTEG) are enriched in polar residues. The segment at residues 133-192 (KKHTRPTFTGHQIFALEKTFEQTKYLAGPERARLAFSLGMSESQVKVWFQNRRTKWRKKS) is a DNA-binding region (homeobox).

It is found in the nucleus. Putative transcription factor, which may be involved in patterning of central nervous system and pancreas. This is Homeobox protein Nkx-6.3 (nkx6-3) from Xenopus laevis (African clawed frog).